The chain runs to 476 residues: Protein transport protein Sec61 subunit alpha (476 aa).

At 2-33 the chain is on the cytoplasmic side; sequence GIKFLEVIKPFCAVLPEIQKPERKIQFREKVL. A helical membrane pass occupies residues 34-53; sequence WTAITLFIFLVCCQIPLFGI. Topologically, residues 54–76 are lumenal; it reads MSSDSADPFYWMRVILASNRGTL. A helical transmembrane segment spans residues 77 to 96; it reads MELGISPIVTSGLIMQLLAG. Over 97–117 the chain is Cytoplasmic; it reads AKIIEVGDTPKDRALFNGAQK. The chain crosses the membrane as a helical span at residues 118-138; sequence LFGMIITIGQAIVYVMTGMYG. Residues 139–144 are Lumenal-facing; it reads DPSEMG. A helical membrane pass occupies residues 145 to 165; the sequence is AGICLLIIIQLFVAGLIVLLL. The Cytoplasmic portion of the chain corresponds to 166–172; it reads DELLQKG. A helical transmembrane segment spans residues 173-193; it reads YGLGSGISLFIATNICETIVW. At 194-240 the chain is on the lumenal side; that stretch reads KAFSPTTVNTGRGTEFEGAIIALFHLLATRTDKVRALREAFYRQNLP. A helical membrane pass occupies residues 241–261; that stretch reads NILNLIATVFVFAVVIYFQGF. The Cytoplasmic portion of the chain corresponds to 262–288; sequence RVDLPIKSARYRGQYNTYPIKLFYTSN. A helical membrane pass occupies residues 289–309; the sequence is IPIILQSALVSNLYVISQMLS. Over 310-354 the chain is Lumenal; the sequence is TRFSGNFLVNLLGTWSDATSGGPARAYPVAGLCYYLSPPESFGSV. The chain crosses the membrane as a helical span at residues 355 to 375; sequence LDDPVHAAIYIVFMLGSCAFF. The Cytoplasmic portion of the chain corresponds to 376-420; that stretch reads SKTWIEVSGSSAKDVAKQLKEQQMVMRGHRETSMVHELNRYIPTA. A helical transmembrane segment spans residues 421 to 441; the sequence is AAFGGLCIGGLSVMADFLGAI. Topologically, residues 442-445 are lumenal; the sequence is GSGT. A helical membrane pass occupies residues 446 to 462; that stretch reads GILLAVTIIYQYFEIFV. At 463–476 the chain is on the cytoplasmic side; it reads KEQSEMGSMGALLF.

The protein belongs to the SecY/SEC61-alpha family. In terms of assembly, the SEC61 channel-forming translocon complex consists of channel-forming core components SEC61A1, SEC61B and SEC61G and different auxiliary components such as SEC62 and SEC63. The SEC61 channel associates with the multi-pass translocon (MPT) complex.

The protein localises to the endoplasmic reticulum membrane. Its function is as follows. Component of SEC61 channel-forming translocon complex that mediates transport of signal peptide-containing precursor polypeptides across the endoplasmic reticulum (ER). Forms a ribosome receptor and a gated pore in the ER membrane, both functions required for cotranslational translocation of nascent polypeptides. May cooperate with auxiliary protein SEC62, SEC63 and HSPA5/BiP to enable post-translational transport of small presecretory proteins. The SEC61 channel is also involved in ER membrane insertion of transmembrane proteins: it mediates membrane insertion of the first few transmembrane segments of proteins, while insertion of subsequent transmembrane regions of multi-pass membrane proteins is mediated by the multi-pass translocon (MPT) complex. The polypeptide is Protein transport protein Sec61 subunit alpha (sec61a) (Dissostichus mawsoni (Antarctic cod)).